We begin with the raw amino-acid sequence, 389 residues long: DNA replication and repair protein RecF (389 aa).

30–37 (GPNGFGKT) contributes to the ATP binding site.

Belongs to the RecF family.

The protein localises to the cytoplasm. In terms of biological role, the RecF protein is involved in DNA metabolism; it is required for DNA replication and normal SOS inducibility. RecF binds preferentially to single-stranded, linear DNA. It also seems to bind ATP. The polypeptide is DNA replication and repair protein RecF (Mycolicibacterium gilvum (strain PYR-GCK) (Mycobacterium gilvum (strain PYR-GCK))).